A 159-amino-acid polypeptide reads, in one-letter code: 2-C-methyl-D-erythritol 2,4-cyclodiphosphate synthase (159 aa).

The a divalent metal cation site is built by Asp-8 and His-10. 4-CDP-2-C-methyl-D-erythritol 2-phosphate is bound by residues 8 to 10 (DVH) and 34 to 35 (HS). Residue His-42 coordinates a divalent metal cation. Residues 56–58 (DIG), 61–65 (FPDTD), 100–106 (AQAPKML), 132–135 (TTTE), Phe-139, and Arg-142 contribute to the 4-CDP-2-C-methyl-D-erythritol 2-phosphate site.

Belongs to the IspF family. Homotrimer. Requires a divalent metal cation as cofactor.

The catalysed reaction is 4-CDP-2-C-methyl-D-erythritol 2-phosphate = 2-C-methyl-D-erythritol 2,4-cyclic diphosphate + CMP. It functions in the pathway isoprenoid biosynthesis; isopentenyl diphosphate biosynthesis via DXP pathway; isopentenyl diphosphate from 1-deoxy-D-xylulose 5-phosphate: step 4/6. In terms of biological role, involved in the biosynthesis of isopentenyl diphosphate (IPP) and dimethylallyl diphosphate (DMAPP), two major building blocks of isoprenoid compounds. Catalyzes the conversion of 4-diphosphocytidyl-2-C-methyl-D-erythritol 2-phosphate (CDP-ME2P) to 2-C-methyl-D-erythritol 2,4-cyclodiphosphate (ME-CPP) with a corresponding release of cytidine 5-monophosphate (CMP). In Salmonella arizonae (strain ATCC BAA-731 / CDC346-86 / RSK2980), this protein is 2-C-methyl-D-erythritol 2,4-cyclodiphosphate synthase.